The sequence spans 436 residues: Prenyltransferase nscD (436 aa).

The protein belongs to the tryptophan dimethylallyltransferase family.

The protein operates within secondary metabolite biosynthesis. In terms of biological role, prenyltransferase; part of the gene cluster that mediates the biosynthesis of neosartoricin B, a prenylated anthracenone that probably exhibits T-cell antiproliferative activity, suggestive of a physiological role as an immunosuppressive agent. The non-reducing polyketide synthase nscA probably synthesizes and cyclizes the decaketide backbone. The hydrolase nscB then mediates the product release through hydrolysis followed by spontaneous decarboxylation. The prenyltransferase nscD catalyzes the addition of the dimethylallyl group to the aromatic C5. The FAD-dependent monooxygenase nscC is then responsible for the stereospecific hydroxylation at C2. Neosartoricin B can be converted into two additional compounds neosartoricins C and D. Neosartoricin C is a spirocyclic compound that is cyclized through the attack of C3 hydroxyl on C14, followed by dehydration. On the other hand, neosartoricin D is a further cyclized compound in which attack of C2 on C14 in neosartoricin C results in the formation of the acetal-containing dioxabicyclo-octanone ring. Both of these compounds are novel and possibly represent related metabolites of the gene cluster. In Arthroderma gypseum (strain ATCC MYA-4604 / CBS 118893) (Microsporum gypseum), this protein is Prenyltransferase nscD.